A 279-amino-acid chain; its full sequence is Thiazole synthase (279 aa).

K116 (schiff-base intermediate with DXP) is an active-site residue. 1-deoxy-D-xylulose 5-phosphate contacts are provided by residues G177, 203 to 204, and 225 to 226; these read AG and NS.

This sequence belongs to the ThiG family. As to quaternary structure, homotetramer. Forms heterodimers with either ThiH or ThiS.

The protein resides in the cytoplasm. The enzyme catalyses [ThiS sulfur-carrier protein]-C-terminal-Gly-aminoethanethioate + 2-iminoacetate + 1-deoxy-D-xylulose 5-phosphate = [ThiS sulfur-carrier protein]-C-terminal Gly-Gly + 2-[(2R,5Z)-2-carboxy-4-methylthiazol-5(2H)-ylidene]ethyl phosphate + 2 H2O + H(+). It participates in cofactor biosynthesis; thiamine diphosphate biosynthesis. Its function is as follows. Catalyzes the rearrangement of 1-deoxy-D-xylulose 5-phosphate (DXP) to produce the thiazole phosphate moiety of thiamine. Sulfur is provided by the thiocarboxylate moiety of the carrier protein ThiS. In vitro, sulfur can be provided by H(2)S. This chain is Thiazole synthase, found in Trichodesmium erythraeum (strain IMS101).